Consider the following 86-residue polypeptide: Small ribosomal subunit protein bS20 (86 aa).

This sequence belongs to the bacterial ribosomal protein bS20 family.

Binds directly to 16S ribosomal RNA. The protein is Small ribosomal subunit protein bS20 of Kineococcus radiotolerans (strain ATCC BAA-149 / DSM 14245 / SRS30216).